Here is a 398-residue protein sequence, read N- to C-terminus: Energy-coupling factor transporter ATP-binding protein EcfA2 (398 aa).

In terms of domain architecture, ABC transporter spans I5 to K240. G38–S45 contacts ATP.

The protein belongs to the ABC transporter superfamily. Energy-coupling factor EcfA family. In terms of assembly, forms a stable energy-coupling factor (ECF) transporter complex composed of 2 membrane-embedded substrate-binding proteins (S component), 2 ATP-binding proteins (A component) and 2 transmembrane proteins (T component).

The protein localises to the cell membrane. ATP-binding (A) component of a common energy-coupling factor (ECF) ABC-transporter complex. Unlike classic ABC transporters this ECF transporter provides the energy necessary to transport a number of different substrates. This is Energy-coupling factor transporter ATP-binding protein EcfA2 from Methanospirillum hungatei JF-1 (strain ATCC 27890 / DSM 864 / NBRC 100397 / JF-1).